A 192-amino-acid chain; its full sequence is Recombination protein RecR (192 aa).

Residues 51–66 (CQTCFHLSADPECEIC) form a C4-type zinc finger. One can recognise a Toprim domain in the interval 74 to 168 (GLICVVADSR…PVSRIAYGLP (95 aa)).

The protein belongs to the RecR family.

Functionally, may play a role in DNA repair. It seems to be involved in an RecBC-independent recombinational process of DNA repair. It may act with RecF and RecO. The protein is Recombination protein RecR of Parasynechococcus marenigrum (strain WH8102).